We begin with the raw amino-acid sequence, 308 residues long: Reticulon-like protein 1 (308 aa).

Polar residues-rich tracts occupy residues 1–17 and 41–66; these read MSEQ…SVTA and PSTE…IQNI. Disordered regions lie at residues 1–22 and 41–92; these read MSEQ…DVAA and PSTE…CPVS. N-linked (GlcNAc...) asparagine glycosylation occurs at Asn65. Positions 67-81 are enriched in low complexity; sequence SSSSSEPHHTSQSTP. N-linked (GlcNAc...) asparagine glycosylation is found at Asn113 and Asn135. In terms of domain architecture, Reticulon spans 127 to 308; sequence LWSVLTWKNT…TETINTTVNK (182 aa). Transmembrane regions (helical) follow at residues 138-158, 166-186, 233-253, and 255-275; these read CSFS…WINL, FRYV…ASNG, PILT…SGFL, and YKSL…LYVC. Residue Asn303 is glycosylated (N-linked (GlcNAc...) asparagine).

Interacts with TTS1 and YOP1.

It is found in the endoplasmic reticulum membrane. Its subcellular location is the nucleus membrane. Required for the correct positioning of the cellular division plane by delimiting the actomyosin ring assembly at the cell equator. Overexpression causes cell lysis. This Schizosaccharomyces pombe (strain 972 / ATCC 24843) (Fission yeast) protein is Reticulon-like protein 1 (rtn1).